We begin with the raw amino-acid sequence, 324 residues long: THUMP domain-containing protein 1 homolog (324 aa).

Disordered regions lie at residues 1–24 (MEPA…KKYF) and 67–104 (SEKP…DDDD). Basic and acidic residues predominate over residues 68–80 (EKPENEPEKKQPE). Position 99 is a phosphothreonine (Thr-99). At Ser-100 the chain carries Phosphoserine. One can recognise a THUMP domain in the interval 154–260 (DIATTGKSMS…RGWCLLSVID (107 aa)). The segment at 275-324 (NPSDKKSSGEGDSKSETSEVANGNDKEQAESSEESKSNDDENKDSTENDK) is disordered. 2 stretches are compositionally biased toward basic and acidic residues: residues 277–291 (SDKK…KSET) and 298–324 (NDKE…ENDK).

Belongs to the THUMPD1 family.

This Drosophila melanogaster (Fruit fly) protein is THUMP domain-containing protein 1 homolog.